The sequence spans 766 residues: Phospholipid phosphatase-related protein type 4 (766 aa).

At serine 37 the chain carries Phosphoserine. The next 4 helical transmembrane spans lie at 68 to 88 (LPCF…SLYF), 120 to 140 (AIPF…TIMV), 179 to 199 (FVGV…IIQL), and 248 to 268 (SFPS…SMYF). A glycan (N-linked (GlcNAc...) asparagine) is linked at asparagine 269. 2 helical membrane passes run 277-297 (KLLK…CGLT) and 309-329 (VYCG…YAVG). Serine 347 carries the phosphoserine modification. N-linked (GlcNAc...) asparagine glycosylation occurs at asparagine 363. Serine 386 carries the phosphoserine modification. N-linked (GlcNAc...) asparagine glycosylation is present at asparagine 433. A Phosphoserine modification is found at serine 439. 2 disordered regions span residues 454–503 (SKNE…GNQY) and 510–529 (TVPG…IQSR). An N-linked (GlcNAc...) asparagine glycan is attached at asparagine 456. Phosphoserine occurs at positions 462 and 474. N-linked (GlcNAc...) asparagine glycans are attached at residues asparagine 515 and asparagine 545. Serine 608 carries the post-translational modification Phosphoserine. Disordered regions lie at residues 634–654 (PIIQ…KWKA), 672–705 (DSES…GITT), and 741–766 (PERS…PYKD). Over residues 688–702 (RKRKHIDSNEHHHHG) the composition is skewed to basic residues. A compositionally biased stretch (polar residues) spans 743-752 (RSNSPENTRN).

The protein belongs to the PA-phosphatase related phosphoesterase family. O-glycosylated. Probably at Ser-347. As to expression, specifically expressed in neurons (at protein level).

It localises to the postsynaptic density membrane. In terms of biological role, postsynaptic density membrane protein that indirectly regulates glutamatergic synaptic transmission through lysophosphatidic acid (LPA)-mediated signaling pathways. Binds lysophosphatidic acid (LPA) and mediates its internalization into cells. Could act as receptor or a transporter of this lipid at the post-synaptic membrane. Modulates lysophosphatidic acid (LPA) activity in neuron axonal outgrowth during development by attenuating phospholipid-induced axon collapse. This Rattus norvegicus (Rat) protein is Phospholipid phosphatase-related protein type 4.